We begin with the raw amino-acid sequence, 176 residues long: Calcium and integrin-binding family member 2 (176 aa).

3 consecutive EF-hand domains span residues 55 to 90 (RENP…LCES), 92 to 127 (PRDL…LTKS), and 133 to 168 (EVVL…APDF). Residues aspartate 105, asparagine 107, aspartate 109, aspartate 116, aspartate 146, aspartate 148, aspartate 150, lysine 152, and aspartate 157 each contribute to the Ca(2+) site.

Monomer. Homodimer. Interacts with WHRN and MYO7A. Interacts with ITGA2B (via C-terminus cytoplasmic tail region); the interactions are stabilized/increased in a calcium and magnesium-dependent manner. Interacts with ITGA7 (via C-terminus cytoplasmic tail region); the interactions are stabilized/increased in a calcium and magnesium-dependent manner. Interacts with TMC1. Interacts with TMC2. As to expression, expressed in liver, heart, kidney, brain, spleen, stomach, ovary, testis and muscle.

It localises to the cytoplasm. The protein localises to the cell projection. Its subcellular location is the stereocilium. The protein resides in the photoreceptor inner segment. It is found in the cilium. It localises to the photoreceptor outer segment. The protein localises to the cell membrane. Its subcellular location is the sarcolemma. Functionally, calcium- and integrin-binding protein that plays a role in intracellular calcium homeostasis. Acts as an auxiliary subunit of the sensory mechanoelectrical transduction (MET) channel in hair cells. Essential for mechanoelectrical transduction (MET) currents in auditory hair cells and thereby required for hearing. Regulates the function of hair cell mechanotransduction by controlling the distribution of transmembrane channel-like proteins TMC1 and TMC2, and by regulating the function of the MET channels in hair cells. Required for the maintenance of auditory hair cell stereocilia bundle morphology and function and for hair-cell survival in the cochlea. Critical for proper photoreceptor cell maintenance and function. Plays a role in intracellular calcium homeostasis by decreasing ATP-induced calcium release. This chain is Calcium and integrin-binding family member 2 (CIB2), found in Ovis aries (Sheep).